The following is a 214-amino-acid chain: LexA repressor (214 aa).

A DNA-binding region (H-T-H motif) is located at residues 26–46 (VREIGEAVGLSSSSTVHSYLK). Catalysis depends on for autocatalytic cleavage activity residues Ser138 and Lys175.

This sequence belongs to the peptidase S24 family. In terms of assembly, homodimer.

It carries out the reaction Hydrolysis of Ala-|-Gly bond in repressor LexA.. Represses a number of genes involved in the response to DNA damage (SOS response), including recA and lexA. In the presence of single-stranded DNA, RecA interacts with LexA causing an autocatalytic cleavage which disrupts the DNA-binding part of LexA, leading to derepression of the SOS regulon and eventually DNA repair. The chain is LexA repressor from Desulforamulus reducens (strain ATCC BAA-1160 / DSM 100696 / MI-1) (Desulfotomaculum reducens).